We begin with the raw amino-acid sequence, 149 residues long: Transcriptional repressor NrdR (149 aa).

A zinc finger spans residues 3–34 (CPFCAAVDTKVIDSRLVGDGSQVRRRRQCLVC). The 91-residue stretch at 49 to 139 (PRVIKSDEVR…VYRSFEDIRE (91 aa)) folds into the ATP-cone domain.

This sequence belongs to the NrdR family. The cofactor is Zn(2+).

Functionally, negatively regulates transcription of bacterial ribonucleotide reductase nrd genes and operons by binding to NrdR-boxes. This Serratia proteamaculans (strain 568) protein is Transcriptional repressor NrdR.